We begin with the raw amino-acid sequence, 146 residues long: Hemoglobin subunit beta (146 aa).

A Globin domain is found at 2-146; it reads PFSAHEEKLI…VAAALSAEYH (145 aa). Heme b-binding residues include H63 and H92.

The protein belongs to the globin family. Heterotetramer of two alpha chains and two beta chains. Red blood cells.

In terms of biological role, involved in oxygen transport from the lung to the various peripheral tissues. The polypeptide is Hemoglobin subunit beta (HBB) (Caiman crocodilus (Spectacled caiman)).